A 497-amino-acid polypeptide reads, in one-letter code: Lysine--tRNA ligase (497 aa).

The Mg(2+) site is built by glutamate 406 and glutamate 413.

The protein belongs to the class-II aminoacyl-tRNA synthetase family. As to quaternary structure, homodimer. Requires Mg(2+) as cofactor.

It is found in the cytoplasm. The catalysed reaction is tRNA(Lys) + L-lysine + ATP = L-lysyl-tRNA(Lys) + AMP + diphosphate. The protein is Lysine--tRNA ligase of Rhizobium leguminosarum bv. trifolii (strain WSM2304).